A 264-amino-acid chain; its full sequence is ATP synthase subunit a (264 aa).

5 consecutive transmembrane segments (helical) span residues 39–59 (LDTL…FYIV), 97–117 (VAPL…MDLV), 139–159 (TADP…VIFY), 205–225 (LFGN…LPWW), and 239–259 (LLVI…YISL).

It belongs to the ATPase A chain family. In terms of assembly, F-type ATPases have 2 components, CF(1) - the catalytic core - and CF(0) - the membrane proton channel. CF(1) has five subunits: alpha(3), beta(3), gamma(1), delta(1), epsilon(1). CF(0) has three main subunits: a(1), b(2) and c(9-12). The alpha and beta chains form an alternating ring which encloses part of the gamma chain. CF(1) is attached to CF(0) by a central stalk formed by the gamma and epsilon chains, while a peripheral stalk is formed by the delta and b chains.

The protein resides in the cell inner membrane. In terms of biological role, key component of the proton channel; it plays a direct role in the translocation of protons across the membrane. The polypeptide is ATP synthase subunit a (Coxiella burnetii (strain CbuK_Q154) (Coxiella burnetii (strain Q154))).